Consider the following 679-residue polypeptide: G-protein-signaling modulator 2 (679 aa).

The segment at 22-357 is important for interaction with NUMA1; INSC and FRMPD1; sequence ASCLELALEG…HLEISREVGD (336 aa). TPR repeat units lie at residues 24–57, 62–95, 102–135, 142–184, 202–235, 242–275, 282–315, and 322–355; these read CLEL…GTED, SAIY…ARTI, AKAS…SREL, ARAL…AVDL, GRAF…AKEF, RRAY…ARQL, AQSC…AQEL, and GRAC…SREV. Phosphoserine occurs at positions 408 and 484. T487 carries the post-translational modification Phosphothreonine. A GoLoco 1 domain is found at 490–512; that stretch reads DEGFFDLLRRFQSNRMDDQRCHL. Residues S540 and S564 each carry the phosphoserine modification. 3 GoLoco domains span residues 543–565, 594–616, and 628–650; these read TDEF…RASF, DEDF…RCAP, and DEDF…RVLL. GDP contacts are provided by R608, R613, R642, and R647.

The protein belongs to the GPSM family. As to quaternary structure, interacts with the dynein-dynactin complex; this interaction is inhibited in a PLK1-dependent manner. Part of a spindle orientation complex at least composed of GNAI1, GPSM2 and NUMA1. Interacts with LLGL2. Interacts (via TPR repeat region) with INSC/inscuteable. Interacts (via TPR repeat region) with NUMA1 (via C-terminus); this interaction is direct, inhibited in a PLK1-dependent manner and promotes spindle pole organization. INSC and NUMA1 compete for the same binding site, but INSC has higher affinity and can displace NUMA1 (in vitro). Interacts with GNAI2. Interacts (via GoLoco domains) with the GDP-bound form of GNAI1 and GNAI3; has much lower affinity for the GTP-bound form. Interaction with GDP-bound GNAI3 strongly enhances the affinity for NUMA1. Interacts (via TPR repeat region) with FRMPD1. INSC and FRMPD1 compete for the same binding site, but INSC has higher affinity and can displace FRMPD1 (in vitro). Interacts (via TPR repeat region) with FRMPD4. Identified in a complex with INSC and F2RL2/Par3. Interacts with TASOR. In terms of tissue distribution, detected in brain and liver (at protein level). Detected in brain, spleen, liver and testis, and at lower levels in heart, lung and kidney. Enriched in the ventricular zone of the developing central nervous systems. Expressed in proximal colon, ileum, ovary, Sertoli cells of the testis and granular cells within the cerebellum.

It localises to the cytoplasm. Its subcellular location is the cell cortex. The protein localises to the cytoskeleton. It is found in the spindle pole. The protein resides in the lateral cell membrane. Its function is as follows. Plays an important role in mitotic spindle pole organization via its interaction with NUMA1. Required for cortical dynein-dynactin complex recruitment during metaphase. Plays a role in metaphase spindle orientation. Plays an important role in asymmetric cell divisions. Has guanine nucleotide dissociation inhibitor (GDI) activity towards G(i) alpha proteins, such as GNAI1 and GNAI3, and thereby regulates their activity. This chain is G-protein-signaling modulator 2 (Gpsm2), found in Mus musculus (Mouse).